The primary structure comprises 540 residues: Glucose-6-phosphate isomerase (540 aa).

Glu-351 (proton donor) is an active-site residue. Catalysis depends on residues His-382 and Lys-506.

The protein belongs to the GPI family.

The protein localises to the cytoplasm. The enzyme catalyses alpha-D-glucose 6-phosphate = beta-D-fructose 6-phosphate. It functions in the pathway carbohydrate biosynthesis; gluconeogenesis. The protein operates within carbohydrate degradation; glycolysis; D-glyceraldehyde 3-phosphate and glycerone phosphate from D-glucose: step 2/4. In terms of biological role, catalyzes the reversible isomerization of glucose-6-phosphate to fructose-6-phosphate. This Corynebacterium glutamicum (strain R) protein is Glucose-6-phosphate isomerase.